Here is a 200-residue protein sequence, read N- to C-terminus: Large ribosomal subunit protein uL4 (200 aa).

The interval 38–75 (GRQGSKQQKNRSDVSGGGKRPWRQKGTGRARAGTSRGP) is disordered.

The protein belongs to the universal ribosomal protein uL4 family. As to quaternary structure, part of the 50S ribosomal subunit.

Functionally, one of the primary rRNA binding proteins, this protein initially binds near the 5'-end of the 23S rRNA. It is important during the early stages of 50S assembly. It makes multiple contacts with different domains of the 23S rRNA in the assembled 50S subunit and ribosome. Forms part of the polypeptide exit tunnel. In Azotobacter vinelandii (strain DJ / ATCC BAA-1303), this protein is Large ribosomal subunit protein uL4.